A 279-amino-acid chain; its full sequence is Complement component 1 Q subcomponent-binding protein, mitochondrial (279 aa).

The N-terminal 71 residues, 1–71 (MLPLLRCVPR…PVPCACGCGA (71 aa)), are a transit peptide targeting the mitochondrion. The C1q binding stretch occupies residues 74–91 (TEGDKAFVEFLTDEIKEE). 2 positions are modified to N6-acetyllysine: Lys89 and Lys92. The disordered stretch occupies residues 134–162 (NNSIPPTFDGEEEPSQGQKAEEQEPELTS). Residues 166–210 (FVVEVTKTDGKKTLVLDCHYPEDEIGHEDEAESDIFSIKEVSFQT) form an interaction with MAVS region. Tyr185 carries the phosphotyrosine modification. Residues Ser198 and Ser202 each carry the phosphoserine modification. Thr211 is subject to Phosphothreonine.

The protein belongs to the MAM33 family. As to quaternary structure, homotrimer; three monomers form a donut-shaped structure with an unusually asymmetric charge distribution on the surface. Interacts with CDK13, HRK, VTN, NFYB, ADRA1B, FOXC1, DDX21, DDX50, NCL, SRSF1 and SRSF9. Interacts with CD93; the association may represent a cell surface C1q receptor. Interacts with KRT1; the association represents a cell surface kininogen receptor. Interacts with CD209; the interaction is indicative for a C1q:C1QBP:CD209 signaling complex. Interacts with FBL and RRP1; the respective interactions with C1QBP are competitive. Probably associates with the mitoribosome. Interacts with MAVS; the interaction occurs upon viral transfection. Interacts with PPIF. Interacts with U2AF1L4. Interacts with PLEKHN1. Interacts with VGF-derived peptide TLQP-21. Interacts with MRE11 and RAD50; forming the MRC (MRE11-RAD50-C1QBP) complex that inhibits the activity of MRE11. Ubiquitous.

It is found in the mitochondrion matrix. Its subcellular location is the nucleus. The protein resides in the cell membrane. The protein localises to the secreted. It localises to the cytoplasm. It is found in the nucleolus. Its function is as follows. Multifunctional and multicompartmental protein involved in inflammation and infection processes, ribosome biogenesis, protein synthesis in mitochondria, regulation of apoptosis, transcriptional regulation and pre-mRNA splicing. At the cell surface is thought to act as an endothelial receptor for plasma proteins of the complement and kallikrein-kinin cascades. Putative receptor for C1q; specifically binds to the globular 'heads' of C1q thus inhibiting C1; may perform the receptor function through a complex with C1qR/CD93. In complex with cytokeratin-1/KRT1 is a high affinity receptor for kininogen-1/HMWK. Can also bind other plasma proteins, such as coagulation factor XII leading to its autoactivation. May function to bind initially fluid kininogen-1 to the cell membrane. The secreted form may enhance both extrinsic and intrinsic coagulation pathways. It is postulated that the cell surface form requires docking with transmembrane proteins for downstream signaling which might be specific for a cell-type or response. By acting as C1q receptor is involved in chemotaxis of immature dendritic cells and neutrophils and is proposed to signal through CD209/DC-SIGN on immature dendritic cells, through integrin alpha-4/beta-1 during trophoblast invasion of the decidua, and through integrin beta-1 during endothelial cell adhesion and spreading. Signaling involved in inhibition of innate immune response is implicating the PI3K-AKT/PKB pathway. Required for protein synthesis in mitochondria. In mitochondrial translation may be involved in formation of functional 55S mitoribosomes; the function seems to involve its RNA-binding activity. Acts as a RNA modification reader, which specifically recognizes and binds mitochondrial RNAs modified by C5-methylcytosine (m5C) in response to stress, and promotes recruitment of the mitochondrial degradosome complex, leading to their degradation. May be involved in the nucleolar ribosome maturation process; the function may involve the exchange of FBL for RRP1 in the association with pre-ribosome particles. Involved in regulation of RNA splicing by inhibiting the RNA-binding capacity of SRSF1 and its phosphorylation. Is required for the nuclear translocation of splicing factor U2AF1L4. Involved in regulation of CDKN2A- and HRK-mediated apoptosis. Stabilizes mitochondrial CDKN2A isoform smARF. May be involved in regulation of FOXC1 transcriptional activity and NFY/CCAAT-binding factor complex-mediated transcription. May play a role in antibacterial defense as it can bind to cell surface hyaluronan and inhibit Streptococcus pneumoniae hyaluronate lyase. May be involved in modulation of the immune response; ligation by HCV core protein is resulting in suppression of interleukin-12 production in monocyte-derived dendritic cells. Involved in regulation of antiviral response by inhibiting RIGI- and IFIH1-mediated signaling pathways probably involving its association with MAVS after viral infection. Acts as a regulator of DNA repair via homologous recombination by inhibiting the activity of MRE11: interacts with unphosphorylated MRE11 and RAD50 in absence of DNA damage, preventing formation and activity of the MRN complex. Following DNA damage, dissociates from phosphorylated MRE11, allowing formation of the MRN complex. The chain is Complement component 1 Q subcomponent-binding protein, mitochondrial (C1qbp) from Rattus norvegicus (Rat).